We begin with the raw amino-acid sequence, 254 residues long: Alcohol dehydrogenase (254 aa).

10–33 (FVAGLGGIGLDTSREIVKSGPKNL) contributes to the NAD(+) binding site. Substrate is bound at residue Ser-138. Catalysis depends on Tyr-151, which acts as the Proton acceptor.

This sequence belongs to the short-chain dehydrogenases/reductases (SDR) family. Homodimer.

The catalysed reaction is a primary alcohol + NAD(+) = an aldehyde + NADH + H(+). It carries out the reaction a secondary alcohol + NAD(+) = a ketone + NADH + H(+). In Drosophila flavomontana (Fruit fly), this protein is Alcohol dehydrogenase (Adh).